Reading from the N-terminus, the 240-residue chain is NKG2-E type II integral membrane protein (240 aa).

The span at 1–12 (MSKQRGTFSEVS) shows a compositional bias: polar residues. Positions 1 to 31 (MSKQRGTFSEVSLAQDPKWQQRKPKGNKSSI) are disordered. Residues 1–70 (MSKQRGTFSE…CQGLLPPPEK (70 aa)) lie on the Cytoplasmic side of the membrane. Residues 71-93 (LTAEVLGIICIVLMATVLKTIVL) traverse the membrane as a helical; Signal-anchor for type II membrane protein segment. At 94 to 240 (IPFLEQNNSS…IMLTRLVLNS (147 aa)) the chain is on the extracellular side. Asn-100 carries N-linked (GlcNAc...) asparagine glycosylation. Residues 116–230 (HCPEEWITYS…GSSRIIRRGF (115 aa)) form the C-type lectin domain. A disulfide bond links Cys-117 and Cys-128. 2 N-linked (GlcNAc...) asparagine glycosylation sites follow: Asn-149 and Asn-179. A disulfide bridge links Cys-207 with Cys-220.

As to quaternary structure, can form disulfide-bonded heterodimer with CD94. Natural killer cells.

The protein resides in the membrane. Functionally, plays a role as a receptor for the recognition of MHC class I HLA-E molecules by NK cells and some cytotoxic T-cells. In Homo sapiens (Human), this protein is NKG2-E type II integral membrane protein (KLRC3).